Consider the following 1142-residue polypeptide: Nucleoporin nup131 (1142 aa).

This sequence belongs to the nucleoporin Nup133 family. As to quaternary structure, component of the npc107-120 complex which consists of nup85, nup107, nup120, nup131, nup132 and seh1. Interacts with nup107.

Its subcellular location is the nucleus. Functionally, functions as a component of the nuclear pore complex (NPC). NPC components, collectively referred to as nucleoporins (NUPs), can play the role of both NPC structural components and of docking or interaction partners for transiently associated nuclear transport factors. Active directional transport is assured by both, a Phe-Gly (FG) repeat affinity gradient for these transport factors across the NPC and a transport cofactor concentration gradient across the nuclear envelope. This is Nucleoporin nup131 (nup131) from Schizosaccharomyces pombe (strain 972 / ATCC 24843) (Fission yeast).